Reading from the N-terminus, the 217-residue chain is Ribosomal RNA small subunit methyltransferase G (217 aa).

S-adenosyl-L-methionine is bound by residues Gly78, Phe83, Gly129–Glu130, and Arg146.

The protein belongs to the methyltransferase superfamily. RNA methyltransferase RsmG family.

It localises to the cytoplasm. The enzyme catalyses guanosine(527) in 16S rRNA + S-adenosyl-L-methionine = N(7)-methylguanosine(527) in 16S rRNA + S-adenosyl-L-homocysteine. In terms of biological role, specifically methylates the N7 position of guanine in position 527 of 16S rRNA. In Geobacter sulfurreducens (strain ATCC 51573 / DSM 12127 / PCA), this protein is Ribosomal RNA small subunit methyltransferase G.